A 498-amino-acid polypeptide reads, in one-letter code: L-ornithine N(5)-monooxygenase (498 aa).

FAD-binding positions include Glu-80–His-88 and Gln-99. Residue Lys-104 participates in substrate binding. Val-165 serves as a coordination point for FAD. NADP(+) contacts are provided by residues Ser-251–Ser-254 and Arg-276. Substrate contacts are provided by residues Asn-290–Phe-293 and Asn-320. Asn-320–Ser-322 serves as a coordination point for NADP(+). Ser-463 to Leu-465 is a binding site for FAD. Residue Ser-466 coordinates substrate.

It belongs to the lysine N(6)-hydroxylase/L-ornithine N(5)-oxygenase family. Homotetramer. It depends on FAD as a cofactor.

The enzyme catalyses L-ornithine + NADPH + O2 = N(5)-hydroxy-L-ornithine + NADP(+) + H2O. It carries out the reaction L-ornithine + NADH + O2 = N(5)-hydroxy-L-ornithine + NAD(+) + H2O. The protein operates within siderophore biosynthesis. Functionally, catalyzes the conversion of L-ornithine to N(5)-hydroxyornithine, the first step in the biosynthesis of all hydroxamate-containing siderophores, such as the secreted triacetylfusarinine C (TAFC) involved in iron uptake and the intracellular iron storage compound desferriferricrocin (DFFC). This chain is L-ornithine N(5)-monooxygenase, found in Emericella nidulans (strain FGSC A4 / ATCC 38163 / CBS 112.46 / NRRL 194 / M139) (Aspergillus nidulans).